A 406-amino-acid polypeptide reads, in one-letter code: Type II secretion system protein F (406 aa).

Over 1 to 171 (MAAFEYKALD…KMRSKLQQAM (171 aa)) the chain is Cytoplasmic. Positions 97, 151, and 155 each coordinate Ca(2+). The helical transmembrane segment at 172–192 (IYPVVLVVFAVGIVAFLLAAV) threads the bilayer. Residues 193-223 (VPKIVGQFVQMGQALPASTQFLLDASDFLQH) are Periplasmic-facing. A helical membrane pass occupies residues 224–244 (WGISLLVGLLMLIYLVRWLLT). At 245–368 (KPDIRLRWDR…QDNSFESTVN (124 aa)) the chain is on the cytoplasmic side. The helical transmembrane segment at 369-389 (IALGIFTPALIALMAGMVLFI) threads the bilayer. Residues 390-406 (VMATLMPILEMNNLMSR) lie on the Periplasmic side of the membrane.

Belongs to the GSP F family. In terms of assembly, type II secretion system is composed of four main components: the outer membrane complex, the inner membrane complex, the cytoplasmic secretion ATPase and the periplasm-spanning pseudopilus. Homodimer. Interacts with EpsE/GspE and EpsL/GspL components.

It is found in the cell inner membrane. Component of the type II secretion system inner membrane complex required for the energy-dependent secretion of extracellular factors such as proteases and toxins from the periplasm. This chain is Type II secretion system protein F (epsF), found in Vibrio cholerae serotype O1 (strain ATCC 39315 / El Tor Inaba N16961).